Here is a 624-residue protein sequence, read N- to C-terminus: Sodium/potassium/calcium exchanger 3 (624 aa).

Positions Arg1 to Arg25 are cleaved as a signal peptide. Residues Glu26 to Gln88 lie on the Extracellular side of the membrane. N-linked (GlcNAc...) asparagine glycosylation is found at Asn52 and Asn67. The chain crosses the membrane as a helical span at residues Gly89–Cys109. Topologically, residues Asp110–Ala133 are cytoplasmic. The Alpha-1 repeat unit spans residues Val130–Phe170. A helical transmembrane segment spans residues Thr134–Ile154. At Thr155–Thr163 the chain is on the extracellular side. Residues Ile164 to Gly184 form a helical membrane-spanning segment. At Gln185 to Ser191 the chain is on the cytoplasmic side. Residues Trp192 to Ile212 form a helical membrane-spanning segment. Residues Tyr213–Glu215 are Extracellular-facing. The helical transmembrane segment at Lys216–Met236 threads the bilayer. Topologically, residues Lys237–Thr465 are cytoplasmic. Ser289 bears the Phosphoserine mark. A compositionally biased stretch (acidic residues) spans Ala386–Gly414. Positions Ala386–Pro421 are disordered. A helical membrane pass occupies residues Leu466 to Leu486. Residues Gly487–Val491 are Extracellular-facing. The helical transmembrane segment at Ile492–Ile512 threads the bilayer. Residues Ala499–Asn530 form an Alpha-2 repeat. Residues Val513–Asn530 are Cytoplasmic-facing. A helical membrane pass occupies residues Val531–Tyr551. Over Gly552–Gly561 the chain is Extracellular. Residues Leu562–Leu582 form a helical membrane-spanning segment. Over Asn583–Leu596 the chain is Cytoplasmic. A helical transmembrane segment spans residues Phe597–Val617. Topologically, residues Asn618–Asp624 are extracellular.

This sequence belongs to the Ca(2+):cation antiporter (CaCA) (TC 2.A.19) family. SLC24A subfamily. In terms of tissue distribution, abundant in the brain. Expressed at low levels in the aorta, uterus and intestine.

The protein resides in the cell membrane. The catalysed reaction is Ca(2+)(out) + K(+)(out) + 4 Na(+)(in) = Ca(2+)(in) + K(+)(in) + 4 Na(+)(out). In terms of biological role, calcium, potassium:sodium antiporter that transports 1 Ca(2+) and 1 K(+) in exchange for 4 Na(+). The chain is Sodium/potassium/calcium exchanger 3 (Slc24a3) from Rattus norvegicus (Rat).